We begin with the raw amino-acid sequence, 657 residues long: tRNA 5-methylaminomethyl-2-thiouridine biosynthesis bifunctional protein MnmC (657 aa).

The segment at 1–239 (MTDRIVPATL…KRAMLVGEFA (239 aa)) is tRNA (mnm(5)s(2)U34)-methyltransferase. Residues 263–657 (IGAGLAGCAV…VRALRHGRVA (395 aa)) are FAD-dependent cmnm(5)s(2)U34 oxidoreductase.

It in the N-terminal section; belongs to the methyltransferase superfamily. tRNA (mnm(5)s(2)U34)-methyltransferase family. In the C-terminal section; belongs to the DAO family. FAD serves as cofactor.

The protein resides in the cytoplasm. The enzyme catalyses 5-aminomethyl-2-thiouridine(34) in tRNA + S-adenosyl-L-methionine = 5-methylaminomethyl-2-thiouridine(34) in tRNA + S-adenosyl-L-homocysteine + H(+). In terms of biological role, catalyzes the last two steps in the biosynthesis of 5-methylaminomethyl-2-thiouridine (mnm(5)s(2)U) at the wobble position (U34) in tRNA. Catalyzes the FAD-dependent demodification of cmnm(5)s(2)U34 to nm(5)s(2)U34, followed by the transfer of a methyl group from S-adenosyl-L-methionine to nm(5)s(2)U34, to form mnm(5)s(2)U34. This is tRNA 5-methylaminomethyl-2-thiouridine biosynthesis bifunctional protein MnmC from Burkholderia mallei (strain SAVP1).